A 241-amino-acid chain; its full sequence is DNA repair protein RecO (241 aa).

This sequence belongs to the RecO family.

In terms of biological role, involved in DNA repair and RecF pathway recombination. This chain is DNA repair protein RecO, found in Ruegeria sp. (strain TM1040) (Silicibacter sp.).